We begin with the raw amino-acid sequence, 118 residues long: Large ribosomal subunit protein bL19 (118 aa).

This sequence belongs to the bacterial ribosomal protein bL19 family.

In terms of biological role, this protein is located at the 30S-50S ribosomal subunit interface and may play a role in the structure and function of the aminoacyl-tRNA binding site. This chain is Large ribosomal subunit protein bL19, found in Geobacter sulfurreducens (strain ATCC 51573 / DSM 12127 / PCA).